The following is a 256-amino-acid chain: Acetoacetate decarboxylase 3 (256 aa).

Lysine 110 (schiff-base intermediate with acetoacetate) is an active-site residue.

It belongs to the ADC family.

The catalysed reaction is acetoacetate + H(+) = acetone + CO2. Catalyzes the conversion of acetoacetate to acetone and carbon dioxide. The chain is Acetoacetate decarboxylase 3 from Mesorhizobium japonicum (strain LMG 29417 / CECT 9101 / MAFF 303099) (Mesorhizobium loti (strain MAFF 303099)).